Here is a 637-residue protein sequence, read N- to C-terminus: Biosynthetic arginine decarboxylase (637 aa).

Lys-101 bears the N6-(pyridoxal phosphate)lysine mark. Residue 286 to 296 coordinates substrate; sequence FDVGGGLAVDY.

It belongs to the Orn/Lys/Arg decarboxylase class-II family. SpeA subfamily. Mg(2+) serves as cofactor. Requires pyridoxal 5'-phosphate as cofactor.

The catalysed reaction is L-arginine + H(+) = agmatine + CO2. Its pathway is amine and polyamine biosynthesis; agmatine biosynthesis; agmatine from L-arginine: step 1/1. Its function is as follows. Catalyzes the biosynthesis of agmatine from arginine. This is Biosynthetic arginine decarboxylase from Shewanella putrefaciens (strain CN-32 / ATCC BAA-453).